Consider the following 1648-residue polypeptide: Putative 1-phosphatidylinositol-3-phosphate 5-kinase FAB1C (1648 aa).

The segment covering 97 to 106 has biased composition (basic and acidic residues); that stretch reads YDKVHPRDSP. Disordered stretches follow at residues 97-116, 241-276, 721-746, and 1083-1139; these read YDKV…ATES, QEDH…NDDA, SEIP…ENQL, and KTGD…GTSL. The segment covering 1084-1130 has biased composition (basic and acidic residues); the sequence is TGDDNAPRNPEMHDPPKIDRRMQEGSDERDEQSHTDSEANGDNKDPE. The region spanning 1316–1639 is the PIPK domain; the sequence is NLNNRESEPS…RFRKAMTTYF (324 aa).

Component of the PI(3,5)P2 regulatory complex at least composed of ATG18, SAC/FIG4, FAB1 and VAC14. Requires Mg(2+) as cofactor. It depends on Mn(2+) as a cofactor.

It carries out the reaction a 1,2-diacyl-sn-glycero-3-phospho-(1D-myo-inositol-3-phosphate) + ATP = a 1,2-diacyl-sn-glycero-3-phospho-(1D-myo-inositol-3,5-bisphosphate) + ADP + H(+). Functionally, the PI(3,5)P2 regulatory complex regulates both the synthesis and turnover of phosphatidylinositol 3,5-bisphosphate (PtdIns(3,5)P2). Catalyzes the phosphorylation of phosphatidylinositol 3-phosphate on the fifth hydroxyl of the myo-inositol ring, to form phosphatidylinositol 3,5-bisphosphate. In Arabidopsis thaliana (Mouse-ear cress), this protein is Putative 1-phosphatidylinositol-3-phosphate 5-kinase FAB1C (FAB1C).